We begin with the raw amino-acid sequence, 490 residues long: N-succinylglutamate 5-semialdehyde dehydrogenase (490 aa).

224 to 229 provides a ligand contact to NAD(+); it reads GSSPTG. Active-site residues include Glu247 and Cys281.

It belongs to the aldehyde dehydrogenase family. AstD subfamily.

It carries out the reaction N-succinyl-L-glutamate 5-semialdehyde + NAD(+) + H2O = N-succinyl-L-glutamate + NADH + 2 H(+). It functions in the pathway amino-acid degradation; L-arginine degradation via AST pathway; L-glutamate and succinate from L-arginine: step 4/5. Its function is as follows. Catalyzes the NAD-dependent reduction of succinylglutamate semialdehyde into succinylglutamate. The polypeptide is N-succinylglutamate 5-semialdehyde dehydrogenase (Hahella chejuensis (strain KCTC 2396)).